We begin with the raw amino-acid sequence, 488 residues long: Protein nucleotidyltransferase YdiU (488 aa).

ATP-binding residues include G91, G93, R94, K114, D126, G127, R177, and R184. Residues 108-127 (RFDIQLKGSGPTPYSRRGDG) form a disordered region. Residue D253 is the Proton acceptor of the active site. Mg(2+)-binding residues include N254 and D263. D263 provides a ligand contact to ATP.

The protein belongs to the SELO family. It depends on Mg(2+) as a cofactor. Requires Mn(2+) as cofactor.

The enzyme catalyses L-seryl-[protein] + ATP = 3-O-(5'-adenylyl)-L-seryl-[protein] + diphosphate. It carries out the reaction L-threonyl-[protein] + ATP = 3-O-(5'-adenylyl)-L-threonyl-[protein] + diphosphate. The catalysed reaction is L-tyrosyl-[protein] + ATP = O-(5'-adenylyl)-L-tyrosyl-[protein] + diphosphate. It catalyses the reaction L-histidyl-[protein] + UTP = N(tele)-(5'-uridylyl)-L-histidyl-[protein] + diphosphate. The enzyme catalyses L-seryl-[protein] + UTP = O-(5'-uridylyl)-L-seryl-[protein] + diphosphate. It carries out the reaction L-tyrosyl-[protein] + UTP = O-(5'-uridylyl)-L-tyrosyl-[protein] + diphosphate. Nucleotidyltransferase involved in the post-translational modification of proteins. It can catalyze the addition of adenosine monophosphate (AMP) or uridine monophosphate (UMP) to a protein, resulting in modifications known as AMPylation and UMPylation. The sequence is that of Protein nucleotidyltransferase YdiU from Bacillus anthracis (strain A0248).